The following is a 422-amino-acid chain: DLRANDLKRSQEIVESKSQRLDAGILDLEKRKFLVDQKEEYLIKLLEDVSGLTKYQAKELLIKQIKNKSEKELISILKNAELQAHSKAKIISNNILILAMERIKVELTSQRTTNIVKLPSDDLKGRIIGKDGRNMKTFEQIGGVDIVVDETPNVVVVSSFNPIRREIATRTLEQLIIDGRIQPVKIENELKKQEQELEYIIQETGLNTIKELNINDIDIELVKLIGKLKFRTSYGQNVLAHSIEVAKLSGAIASELGLDVEKAIRAGLLHDIGKAIDFEKQGSHVVLGAEIARKYNEDPIIINSIESHHEDKEKSSEIAAIVAIADSISASRPGARYNAIDEFILRMHEIEKIGNSIPGVAKTYALQSGRQIRLIVDPLVASDLDLALILEKMKEQIKNKVIIPGEITITVIREKKETDILK.

The KH domain maps to 112 to 172 (TTNIVKLPSD…IRREIATRTL (61 aa)). Residues 238–331 (VLAHSIEVAK…VAIADSISAS (94 aa)) enclose the HD domain.

The protein belongs to the RNase Y family.

In terms of biological role, endoribonuclease that initiates mRNA decay. This Mycoplasma mycoides protein is Ribonuclease Y.